Here is a 247-residue protein sequence, read N- to C-terminus: Triosephosphate isomerase (247 aa).

Residue 9 to 11 coordinates substrate; that stretch reads NWK. His-94 acts as the Electrophile in catalysis. The active-site Proton acceptor is the Glu-166. Residues Gly-172, Ser-211, and 232–233 contribute to the substrate site; that span reads GG.

Belongs to the triosephosphate isomerase family. Homodimer.

It is found in the cytoplasm. The enzyme catalyses D-glyceraldehyde 3-phosphate = dihydroxyacetone phosphate. The protein operates within carbohydrate biosynthesis; gluconeogenesis. It functions in the pathway carbohydrate degradation; glycolysis; D-glyceraldehyde 3-phosphate from glycerone phosphate: step 1/1. Involved in the gluconeogenesis. Catalyzes stereospecifically the conversion of dihydroxyacetone phosphate (DHAP) to D-glyceraldehyde-3-phosphate (G3P). This Cupriavidus taiwanensis (strain DSM 17343 / BCRC 17206 / CCUG 44338 / CIP 107171 / LMG 19424 / R1) (Ralstonia taiwanensis (strain LMG 19424)) protein is Triosephosphate isomerase.